The chain runs to 476 residues: Bifunctional protein HldE (476 aa).

A ribokinase region spans residues 1–319; the sequence is MKITLPEYDK…ANAVYSQQEI (319 aa). Residue 196–199 coordinates ATP; it reads NLAE. Asp265 is a catalytic residue. Residues 345-476 are cytidylyltransferase; the sequence is MTNGCFDILH…EIIKTIRNNS (132 aa).

The protein in the N-terminal section; belongs to the carbohydrate kinase PfkB family. It in the C-terminal section; belongs to the cytidylyltransferase family. In terms of assembly, homodimer.

It carries out the reaction D-glycero-beta-D-manno-heptose 7-phosphate + ATP = D-glycero-beta-D-manno-heptose 1,7-bisphosphate + ADP + H(+). The enzyme catalyses D-glycero-beta-D-manno-heptose 1-phosphate + ATP + H(+) = ADP-D-glycero-beta-D-manno-heptose + diphosphate. It participates in nucleotide-sugar biosynthesis; ADP-L-glycero-beta-D-manno-heptose biosynthesis; ADP-L-glycero-beta-D-manno-heptose from D-glycero-beta-D-manno-heptose 7-phosphate: step 1/4. Its pathway is nucleotide-sugar biosynthesis; ADP-L-glycero-beta-D-manno-heptose biosynthesis; ADP-L-glycero-beta-D-manno-heptose from D-glycero-beta-D-manno-heptose 7-phosphate: step 3/4. Its function is as follows. Catalyzes the phosphorylation of D-glycero-D-manno-heptose 7-phosphate at the C-1 position to selectively form D-glycero-beta-D-manno-heptose-1,7-bisphosphate. In terms of biological role, catalyzes the ADP transfer from ATP to D-glycero-beta-D-manno-heptose 1-phosphate, yielding ADP-D-glycero-beta-D-manno-heptose. The sequence is that of Bifunctional protein HldE from Psychromonas ingrahamii (strain DSM 17664 / CCUG 51855 / 37).